The sequence spans 442 residues: Threonine/serine transporter TdcC (442 aa).

Helical transmembrane passes span 21–41, 44–64, 96–116, 139–159, 162–182, 206–226, 258–278, 312–332, 364–384, 388–408, and 422–442; these read TTWT…FFPI, GFGG…IAFL, GVVI…IYGV, VVAL…KDLM, VMSF…LSLI, ILVT…FSPI, ASIL…FTLS, ITLE…SFFG, LISM…NPNI, IEAM…MYAI, and ENYF…YKLL.

The protein belongs to the amino acid/polyamine transporter 2 family. SdaC/TdcC subfamily.

It is found in the cell inner membrane. It carries out the reaction L-threonine(in) + H(+)(in) = L-threonine(out) + H(+)(out). The enzyme catalyses L-serine(in) + H(+)(in) = L-serine(out) + H(+)(out). Functionally, involved in the import of threonine and serine into the cell, with the concomitant import of a proton (symport system). This chain is Threonine/serine transporter TdcC, found in Yersinia enterocolitica serotype O:8 / biotype 1B (strain NCTC 13174 / 8081).